Here is a 387-residue protein sequence, read N- to C-terminus: Adaptive-response sensory kinase SasA (387 aa).

Residues 1 to 97 (MGESLSPQAL…TDQLANQLPQ (97 aa)) form an interacts with KaiC region. The Histidine kinase domain occupies 158-382 (LVAHDLRNPL…TFHFTMPVYR (225 aa)). H161 carries the phosphohistidine; by autocatalysis modification.

Homooligomerizes. Part of the circadian clock (KaiA, KaiB, KaiC, CikA, RpaA, SasA), the composition of which varies during the circadian cycle. Binds to the CI domain of KaiC; KaiB(fs) and SasA compete for the binding site. Binds preferentially to doubly phosphorylated KaiC. Interacts with LdpA. Autophosphorylates in vitro.

The enzyme catalyses ATP + protein L-histidine = ADP + protein N-phospho-L-histidine.. Member of the two-component regulatory system SasA/RpaA involved in genome-wide circadian gene expression. One of three clock output pathways. Participates in the KaiABC clock protein complex, which constitutes the main circadian regulator in cyanobacteria, via its interaction with KaiC. Required for robustness of the circadian rhythm of gene expression and involved in clock output. KaiC enhances the autophosphorylation activity of SasA, which then transfers its phosphate group to RpaA to activate it. Phosphotransfer is maximal when KaiC phosphorylation is active during the circadian cycle; this two-component system is activated by fully phosphorylated KaiC. A very robust clock is reconstituted with KaiA, KaiB, KaiC, SasA, CikA and RpaA; output is measured by transcription from an appropriate reporter. In addition to its output function, recruits fold-shifted KaiB (KaiB(fs)) to KaiC to cooperatively form the KaiB(6):KaiC(6) complex (independent of SasA kinase activity); at physiological concentrations increases their association. At higher concentrations SasA and KaiB(fs) compete to bind to KaiC. Mutations that decrease cooperativity nearly phenocopy a deletion mutation. In terms of biological role, autophosphorylation and phosphotransfer activities are not essential for clock rhythms in continuous light, but they are essential for adaptation to light/dark cycles. This chain is Adaptive-response sensory kinase SasA, found in Synechococcus elongatus (strain ATCC 33912 / PCC 7942 / FACHB-805) (Anacystis nidulans R2).